A 324-amino-acid polypeptide reads, in one-letter code: DnaJ homolog subfamily B member 2 (324 aa).

Alanine 2 bears the N-acetylalanine mark. A J domain is found at 2–71; sequence ASYYEILDVP…REIYDRYGRE (70 aa). Disordered stretches follow at residues 70–90 and 218–324; these read REGL…SGGP and LSRR…CLIL. UIM domains follow at residues 210-226 and 250-269; these read DDLA…QQPS and SEDE…MEAA. Positions 224-241 are enriched in polar residues; that stretch reads QPSVTSRSGGTQVQQTPA. The span at 280–289 shows a compositional bias: basic residues; it reads QHRRQGRPKA. Over residues 303-324 the composition is skewed to basic and acidic residues; the sequence is ARGEATKRSPSPEEKASRCLIL. At serine 311 the chain carries Phosphoserine. Cysteine 321 carries the post-translational modification Cysteine methyl ester. Residue cysteine 321 is the site of S-geranylgeranyl cysteine attachment. Residues 321 to 324 carry the CAAX motif motif; that stretch reads CLIL. Residues 322-324 constitute a propeptide, removed in mature form; it reads LIL.

Interacts with HSP70 (HSPA1A or HSPA1B). Interacts with HSPA8/Hsc70. Interacts with PSMA3 and most probably with the whole proteasomal complex. In terms of processing, ubiquitinated by STUB1; does not lead to proteasomal degradation. As to expression, more abundantly expressed in neocortex, cerebellum, spinal cord and retina where it is expressed by neuronal cells (at protein level). Detected at much lower level in non-neuronal tissues including kidney, lung, heart, skeletal muscle, spleen and testis (at protein level). Isoform 1 is more abundant in neocortex and cerebellum compared to isoform 2 (at protein level).

It is found in the cytoplasm. It localises to the nucleus. Its subcellular location is the endoplasmic reticulum membrane. Its function is as follows. Functions as a co-chaperone, regulating the substrate binding and activating the ATPase activity of chaperones of the HSP70/heat shock protein 70 family. In parallel, also contributes to the ubiquitin-dependent proteasomal degradation of misfolded proteins. Thereby, may regulate the aggregation and promote the functional recovery of misfolded proteins like HTT, MC4R, PRKN, RHO and SOD1 and be crucial for many biological processes. Isoform 1 which is localized to the endoplasmic reticulum membranes may specifically function in ER-associated protein degradation of misfolded proteins. This chain is DnaJ homolog subfamily B member 2, found in Homo sapiens (Human).